Consider the following 117-residue polypeptide: Large ribosomal subunit protein bL20 (117 aa).

This sequence belongs to the bacterial ribosomal protein bL20 family.

Binds directly to 23S ribosomal RNA and is necessary for the in vitro assembly process of the 50S ribosomal subunit. It is not involved in the protein synthesizing functions of that subunit. The protein is Large ribosomal subunit protein bL20 of Rippkaea orientalis (strain PCC 8801 / RF-1) (Cyanothece sp. (strain PCC 8801)).